The sequence spans 375 residues: DNA replication and repair protein RecF (375 aa).

Position 30–37 (30–37 (GDNAQGKS)) interacts with ATP.

It belongs to the RecF family.

The protein resides in the cytoplasm. Functionally, the RecF protein is involved in DNA metabolism; it is required for DNA replication and normal SOS inducibility. RecF binds preferentially to single-stranded, linear DNA. It also seems to bind ATP. The protein is DNA replication and repair protein RecF of Gloeobacter violaceus (strain ATCC 29082 / PCC 7421).